Here is a 563-residue protein sequence, read N- to C-terminus: Arginine--tRNA ligase (563 aa).

The 'HIGH' region motif lies at 121–131; that stretch reads PNIAKPMSMGH.

Belongs to the class-I aminoacyl-tRNA synthetase family. Monomer.

It is found in the cytoplasm. The catalysed reaction is tRNA(Arg) + L-arginine + ATP = L-arginyl-tRNA(Arg) + AMP + diphosphate. In Leuconostoc mesenteroides subsp. mesenteroides (strain ATCC 8293 / DSM 20343 / BCRC 11652 / CCM 1803 / JCM 6124 / NCDO 523 / NBRC 100496 / NCIMB 8023 / NCTC 12954 / NRRL B-1118 / 37Y), this protein is Arginine--tRNA ligase.